The chain runs to 1558 residues: Hybrid PKS-NRPS synthetase TAS1 (1558 aa).

The condensation (C) domain stretch occupies residues 27-392 (YPMTKAQESL…RGLETPRAQV (366 aa)). Residues 522–919 (TYKELNERSN…TITDVMPEVT (398 aa)) are adenylation (A) domain. The segment at 995 to 1028 (TSGSSSSATPSLVSSGSTTCRSPSTSSCSDSRSA) is disordered. Positions 1027–1104 (SASPAITSAV…GQVDLLCGSE (78 aa)) constitute a Carrier domain. O-(pantetheine 4'-phosphoryl)serine is present on Ser-1063. Residues 1116–1144 (LGRGRTKSPAKIVDSQGRSSPSTIPSGGR) are disordered. Polar residues predominate over residues 1131 to 1140 (QGRSSPSTIP). One can recognise a Ketosynthase family 3 (KS3) domain in the interval 1145–1558 (KSEIAIVGIS…GVNAHCVLRS (414 aa)). Catalysis depends on for beta-ketoacyl synthase activity residues Cys-1308, His-1444, and Asn-1484.

It in the N-terminal section; belongs to the NRP synthetase family. Requires pantetheine 4'-phosphate as cofactor.

The catalysed reaction is acetoacetyl-CoA + L-isoleucine + ATP = tenuazonic acid + AMP + diphosphate + CoA + 2 H(+). Functionally, hybrid PKS-NRPS synthetase that mediates the biosynthesis of the toxin tenuazonic acid (TeA), an inhibitor of protein biosynthesis on ribosomes by suppressing the release of new protein. TAS1 alone is sufficient for TeA synthesis via the condensation of isoleucine (Ile) with acetoacetyl-CoA by the N-terminal NRPS module and subsequent cyclization conducted by the C-terminal KS domain. This Gloeophyllum trabeum (strain ATCC 11539 / FP-39264 / Madison 617) (Brown rot fungus) protein is Hybrid PKS-NRPS synthetase TAS1.